The following is a 320-amino-acid chain: Ferrochelatase (320 aa).

2 residues coordinate Fe cation: histidine 194 and glutamate 275.

This sequence belongs to the ferrochelatase family.

Its subcellular location is the cytoplasm. It carries out the reaction heme b + 2 H(+) = protoporphyrin IX + Fe(2+). The protein operates within porphyrin-containing compound metabolism; protoheme biosynthesis; protoheme from protoporphyrin-IX: step 1/1. In terms of biological role, catalyzes the ferrous insertion into protoporphyrin IX. The protein is Ferrochelatase of Pectobacterium atrosepticum (strain SCRI 1043 / ATCC BAA-672) (Erwinia carotovora subsp. atroseptica).